We begin with the raw amino-acid sequence, 120 residues long: Small ribosomal subunit protein eS24 (120 aa).

Residues 101–120 are disordered; that stretch reads RDAGTKQKKGGSKGGQGAKG.

The protein belongs to the eukaryotic ribosomal protein eS24 family.

The protein is Small ribosomal subunit protein eS24 of Saccharolobus islandicus (strain M.16.4 / Kamchatka #3) (Sulfolobus islandicus).